The sequence spans 103 residues: Iron-sulfur cluster assembly protein CyaY (103 aa).

Belongs to the frataxin family.

Involved in iron-sulfur (Fe-S) cluster assembly. May act as a regulator of Fe-S biogenesis. This Rickettsia peacockii (strain Rustic) protein is Iron-sulfur cluster assembly protein CyaY.